The sequence spans 236 residues: 15,16-dihydrobiliverdin:ferredoxin oxidoreductase (236 aa).

This sequence belongs to the HY2 family.

The enzyme catalyses 15,16-dihydrobiliverdin + oxidized 2[4Fe-4S]-[ferredoxin] = biliverdin IXalpha + reduced 2[4Fe-4S]-[ferredoxin] + 2 H(+). In terms of biological role, catalyzes the two-electron reduction of biliverdin IX-alpha at the C15 methine bridge. The chain is 15,16-dihydrobiliverdin:ferredoxin oxidoreductase from Prochlorococcus marinus (strain AS9601).